The primary structure comprises 145 residues: Large ribosomal subunit protein uL24 (145 aa).

Disordered stretches follow at residues Met1–Ala21 and Lys122–Glu145. Lys136 is covalently cross-linked (Glycyl lysine isopeptide (Lys-Gly) (interchain with G-Cter in SUMO2)). Position 139 is a phosphothreonine (Thr139).

It belongs to the universal ribosomal protein uL24 family. As to quaternary structure, component of the large ribosomal subunit. Interacts with DHX33. Ufmylated by UFL1 in response to endoplasmic reticulum stress, promoting reticulophagy of endoplasmic reticulum sheets.

It is found in the cytoplasm. In terms of biological role, component of the large ribosomal subunit. The ribosome is a large ribonucleoprotein complex responsible for the synthesis of proteins in the cell. The polypeptide is Large ribosomal subunit protein uL24 (RPL26) (Bos taurus (Bovine)).